The following is a 325-amino-acid chain: ATP-dependent 6-phosphofructokinase (325 aa).

Gly12 lines the ATP pocket. Position 22–26 (22–26 (RTIVK)) interacts with ADP. Residues 73 to 74 (RY) and 103 to 106 (GDGS) each bind ATP. Position 104 (Asp104) interacts with Mg(2+). 126 to 128 (TID) serves as a coordination point for substrate. Asp128 acts as the Proton acceptor in catalysis. Arg155 contributes to the ADP binding site. 170-172 (MGH) lines the substrate pocket. Residues 186-188 (GAE), Lys213, and 215-217 (KRS) contribute to the ADP site. Substrate is bound by residues Glu224, Arg246, and 252-255 (HTQR).

Belongs to the phosphofructokinase type A (PFKA) family. ATP-dependent PFK group I subfamily. Prokaryotic clade 'B1' sub-subfamily. Homotetramer. It depends on Mg(2+) as a cofactor.

The protein localises to the cytoplasm. The catalysed reaction is beta-D-fructose 6-phosphate + ATP = beta-D-fructose 1,6-bisphosphate + ADP + H(+). The protein operates within carbohydrate degradation; glycolysis; D-glyceraldehyde 3-phosphate and glycerone phosphate from D-glucose: step 3/4. With respect to regulation, allosterically activated by ADP and other diphosphonucleosides, and allosterically inhibited by phosphoenolpyruvate. Its function is as follows. Catalyzes the phosphorylation of D-fructose 6-phosphate to fructose 1,6-bisphosphate by ATP, the first committing step of glycolysis. This is ATP-dependent 6-phosphofructokinase from Mycoplasma mobile (strain ATCC 43663 / 163K / NCTC 11711) (Mesomycoplasma mobile).